The primary structure comprises 911 residues: Protein translocase subunit SecA (911 aa).

ATP-binding positions include Gln87, 105–109 (GEGKT), and Asp499. Zn(2+) contacts are provided by Cys895, Cys897, Cys906, and His907.

This sequence belongs to the SecA family. In terms of assembly, monomer and homodimer. Part of the essential Sec protein translocation apparatus which comprises SecA, SecYEG and auxiliary proteins SecDF-YajC and YidC. Requires Zn(2+) as cofactor.

The protein localises to the cell inner membrane. It localises to the cytoplasm. It carries out the reaction ATP + H2O + cellular proteinSide 1 = ADP + phosphate + cellular proteinSide 2.. Part of the Sec protein translocase complex. Interacts with the SecYEG preprotein conducting channel. Has a central role in coupling the hydrolysis of ATP to the transfer of proteins into and across the cell membrane, serving both as a receptor for the preprotein-SecB complex and as an ATP-driven molecular motor driving the stepwise translocation of polypeptide chains across the membrane. The chain is Protein translocase subunit SecA from Novosphingobium aromaticivorans (strain ATCC 700278 / DSM 12444 / CCUG 56034 / CIP 105152 / NBRC 16084 / F199).